We begin with the raw amino-acid sequence, 221 residues long: Max dimerization protein 1 (221 aa).

The Nuclear localization signal signature appears at 21 to 49 (RREREAEHGYASMLPYNSKERDGLKRKSK). Disordered stretches follow at residues 29 to 67 (GYAS…EKNR) and 178 to 221 (SSSS…SIAL). The bHLH domain maps to 55–107 (SSRSTHNEMEKNRRAHLRLCLEKLKMLVPLGPESNRHTTLSLLMRAKLHIKKL). Residues 193–221 (MQSICSDEGYSSSGLKSIGLQNNPKSIAL) are compositionally biased toward polar residues.

As to quaternary structure, heterodimer with MAX; the interaction is required for DNA-binding. DNA binding requires dimerization with another bHLH protein; does not form homodimers, and does not bind to DNA in the absence of MAX in vitro. Expressed primarily in cells that have undergone terminal differentiation including notochord, floor plate and cement gland.

It is found in the nucleus. In terms of biological role, component of a transcriptional repressor complex together with MAX. In complex with MAX binds to the core DNA sequence 5'-CAC[GA]TG-3'. Antagonizes MYC transcriptional activity by competing with MYC for MAX binding. Binds to the TERT promoter and represses telomerase expression, possibly by interfering with MYC binding. This chain is Max dimerization protein 1 (mxd1), found in Xenopus laevis (African clawed frog).